A 220-amino-acid polypeptide reads, in one-letter code: Peptide methionine sulfoxide reductase MsrA (220 aa).

Cys54 is an active-site residue.

Belongs to the MsrA Met sulfoxide reductase family.

It carries out the reaction L-methionyl-[protein] + [thioredoxin]-disulfide + H2O = L-methionyl-(S)-S-oxide-[protein] + [thioredoxin]-dithiol. The enzyme catalyses [thioredoxin]-disulfide + L-methionine + H2O = L-methionine (S)-S-oxide + [thioredoxin]-dithiol. Its function is as follows. Has an important function as a repair enzyme for proteins that have been inactivated by oxidation. Catalyzes the reversible oxidation-reduction of methionine sulfoxide in proteins to methionine. This is Peptide methionine sulfoxide reductase MsrA from Salinispora arenicola (strain CNS-205).